We begin with the raw amino-acid sequence, 424 residues long: UPF0597 protein SO_1403 (424 aa).

It belongs to the UPF0597 family.

The protein is UPF0597 protein SO_1403 of Shewanella oneidensis (strain ATCC 700550 / JCM 31522 / CIP 106686 / LMG 19005 / NCIMB 14063 / MR-1).